The following is a 176-amino-acid chain: Cathelicidin-2 (176 aa).

The N-terminal stretch at 1–29 (METQRASLSLGRCSLWLLLLGLVLPSASA) is a signal peptide. A Pyrrolidone carboxylic acid modification is found at Gln-30. Positions 30–130 (QALSYREAVL…DINCNELQSV (101 aa)) are excised as a propeptide. Disulfide bonds link Cys-85-Cys-96 and Cys-107-Cys-124. A disordered region spans residues 157 to 176 (IFPPIRPPFRPPLGPFPGRR). A Proline amide modification is found at Pro-173. A propeptide spans 174–176 (GRR) (removed in mature form).

It belongs to the cathelicidin family. In terms of processing, elastase is responsible for its maturation. Large granules of neutrophils.

Its subcellular location is the secreted. Functionally, exerts, in vitro, a potent antimicrobial activity. Probably due to an impairment of the function of the respiratory chain and of energy-dependent activities in the inner membrane of susceptible microorganisms. The chain is Cathelicidin-2 (CATHL2) from Bos taurus (Bovine).